The chain runs to 148 residues: UPF0756 membrane protein NMCC_1816 (148 aa).

The next 4 membrane-spanning stretches (helical) occupy residues 13–35 (LILL…LLLM), 50–70 (HGLN…LVSG), 80–100 (FLNF…WLAG), and 121–141 (VIGV…AGIL).

The protein belongs to the UPF0756 family.

The protein resides in the cell membrane. The protein is UPF0756 membrane protein NMCC_1816 of Neisseria meningitidis serogroup C (strain 053442).